Here is a 284-residue protein sequence, read N- to C-terminus: Phosphatidylserine decarboxylase proenzyme (284 aa).

Catalysis depends on charge relay system; for autoendoproteolytic cleavage activity residues aspartate 88, histidine 145, and serine 251. Serine 251 functions as the Schiff-base intermediate with substrate; via pyruvic acid; for decarboxylase activity in the catalytic mechanism. The residue at position 251 (serine 251) is a Pyruvic acid (Ser); by autocatalysis.

It belongs to the phosphatidylserine decarboxylase family. PSD-B subfamily. Prokaryotic type I sub-subfamily. In terms of assembly, heterodimer of a large membrane-associated beta subunit and a small pyruvoyl-containing alpha subunit. Pyruvate is required as a cofactor. Post-translationally, is synthesized initially as an inactive proenzyme. Formation of the active enzyme involves a self-maturation process in which the active site pyruvoyl group is generated from an internal serine residue via an autocatalytic post-translational modification. Two non-identical subunits are generated from the proenzyme in this reaction, and the pyruvate is formed at the N-terminus of the alpha chain, which is derived from the carboxyl end of the proenzyme. The autoendoproteolytic cleavage occurs by a canonical serine protease mechanism, in which the side chain hydroxyl group of the serine supplies its oxygen atom to form the C-terminus of the beta chain, while the remainder of the serine residue undergoes an oxidative deamination to produce ammonia and the pyruvoyl prosthetic group on the alpha chain. During this reaction, the Ser that is part of the protease active site of the proenzyme becomes the pyruvoyl prosthetic group, which constitutes an essential element of the active site of the mature decarboxylase.

The protein localises to the cell membrane. The catalysed reaction is a 1,2-diacyl-sn-glycero-3-phospho-L-serine + H(+) = a 1,2-diacyl-sn-glycero-3-phosphoethanolamine + CO2. It participates in phospholipid metabolism; phosphatidylethanolamine biosynthesis; phosphatidylethanolamine from CDP-diacylglycerol: step 2/2. In terms of biological role, catalyzes the formation of phosphatidylethanolamine (PtdEtn) from phosphatidylserine (PtdSer). The chain is Phosphatidylserine decarboxylase proenzyme from Polaromonas sp. (strain JS666 / ATCC BAA-500).